The primary structure comprises 265 residues: Proteasome subunit alpha (265 aa).

The tract at residues 236–265 (EKDSKGSKGAQNPKGARDSKNSKSYGESTD) is disordered.

The protein belongs to the peptidase T1A family. In terms of assembly, the 20S proteasome core is composed of 14 alpha and 14 beta subunits that assemble into four stacked heptameric rings, resulting in a barrel-shaped structure. The two inner rings, each composed of seven catalytic beta subunits, are sandwiched by two outer rings, each composed of seven alpha subunits. The catalytic chamber with the active sites is on the inside of the barrel. Has a gated structure, the ends of the cylinder being occluded by the N-termini of the alpha-subunits. Is capped by the proteasome-associated ATPase, ARC.

It is found in the cytoplasm. It participates in protein degradation; proteasomal Pup-dependent pathway. Its activity is regulated as follows. The formation of the proteasomal ATPase ARC-20S proteasome complex, likely via the docking of the C-termini of ARC into the intersubunit pockets in the alpha-rings, may trigger opening of the gate for substrate entry. Interconversion between the open-gate and close-gate conformations leads to a dynamic regulation of the 20S proteasome proteolysis activity. Component of the proteasome core, a large protease complex with broad specificity involved in protein degradation. In Mycobacterium leprae (strain Br4923), this protein is Proteasome subunit alpha.